The chain runs to 159 residues: MSGAGAPVSPQLNAKGLELVIIAASWHEKVMNGLLDGALRAARDAGIEEPRIVRVPGSFELPVAAARLAPDYDAVVALGVVIRGGTPHFEYVCQAATSGLTEVSVRTGVPVGFGLLTCDNDQQALDRAGLPAAPGFAGSKEDKGYEATSAALETALTLR.

5-amino-6-(D-ribitylamino)uracil is bound by residues Trp-26, 58–60, and 80–82; these read SFE and VVI. 85–86 contacts (2S)-2-hydroxy-3-oxobutyl phosphate; it reads GT. Catalysis depends on His-88, which acts as the Proton donor. Residue Phe-113 participates in 5-amino-6-(D-ribitylamino)uracil binding. Arg-127 is a binding site for (2S)-2-hydroxy-3-oxobutyl phosphate.

The protein belongs to the DMRL synthase family.

It carries out the reaction (2S)-2-hydroxy-3-oxobutyl phosphate + 5-amino-6-(D-ribitylamino)uracil = 6,7-dimethyl-8-(1-D-ribityl)lumazine + phosphate + 2 H2O + H(+). The protein operates within cofactor biosynthesis; riboflavin biosynthesis; riboflavin from 2-hydroxy-3-oxobutyl phosphate and 5-amino-6-(D-ribitylamino)uracil: step 1/2. Catalyzes the formation of 6,7-dimethyl-8-ribityllumazine by condensation of 5-amino-6-(D-ribitylamino)uracil with 3,4-dihydroxy-2-butanone 4-phosphate. This is the penultimate step in the biosynthesis of riboflavin. This Renibacterium salmoninarum (strain ATCC 33209 / DSM 20767 / JCM 11484 / NBRC 15589 / NCIMB 2235) protein is 6,7-dimethyl-8-ribityllumazine synthase.